Reading from the N-terminus, the 153-residue chain is Cytochrome c-type biogenesis protein CcmE (153 aa).

Residues 1–7 (MTRKKRR) are Cytoplasmic-facing. The chain crosses the membrane as a helical; Signal-anchor for type II membrane protein span at residues 8 to 28 (LYFVVLGMLALFAAAGLTLTA). Over 29–153 (FQDNLVFFYS…PPTAAAAPAP (125 aa)) the chain is Periplasmic. Heme contacts are provided by histidine 121 and tyrosine 125. The disordered stretch occupies residues 132–153 (ESLKASGKWQHGPPTAAAAPAP). Over residues 144–153 (PPTAAAAPAP) the composition is skewed to low complexity.

The protein belongs to the CcmE/CycJ family.

The protein localises to the cell inner membrane. Heme chaperone required for the biogenesis of c-type cytochromes. Transiently binds heme delivered by CcmC and transfers the heme to apo-cytochromes in a process facilitated by CcmF and CcmH. The chain is Cytochrome c-type biogenesis protein CcmE from Rhodospirillum rubrum (strain ATCC 11170 / ATH 1.1.1 / DSM 467 / LMG 4362 / NCIMB 8255 / S1).